We begin with the raw amino-acid sequence, 165 residues long: Nucleotide-binding protein RoseRS_0530 (165 aa).

This sequence belongs to the YajQ family.

Functionally, nucleotide-binding protein. In Roseiflexus sp. (strain RS-1), this protein is Nucleotide-binding protein RoseRS_0530.